Here is a 168-residue protein sequence, read N- to C-terminus: G/U mismatch-specific DNA glycosylase (168 aa).

This sequence belongs to the uracil-DNA glycosylase (UDG) superfamily. TDG/mug family. In terms of assembly, binds DNA as a monomer.

The protein localises to the cytoplasm. It catalyses the reaction Specifically hydrolyzes mismatched double-stranded DNA and polynucleotides, releasing free uracil.. Its function is as follows. Excises ethenocytosine and uracil, which can arise by alkylation or deamination of cytosine, respectively, from the corresponding mispairs with guanine in ds-DNA. It is capable of hydrolyzing the carbon-nitrogen bond between the sugar-phosphate backbone of the DNA and the mispaired base. The complementary strand guanine functions in substrate recognition. Required for DNA damage lesion repair in stationary-phase cells. This is G/U mismatch-specific DNA glycosylase from Citrobacter koseri (strain ATCC BAA-895 / CDC 4225-83 / SGSC4696).